Reading from the N-terminus, the 109-residue chain is A-type ATP synthase subunit F (109 aa).

Belongs to the V-ATPase F subunit family. As to quaternary structure, has multiple subunits with at least A(3), B(3), C, D, E, F, H, I and proteolipid K(x).

The protein localises to the cell membrane. Functionally, component of the A-type ATP synthase that produces ATP from ADP in the presence of a proton gradient across the membrane. This chain is A-type ATP synthase subunit F, found in Halorubrum lacusprofundi (strain ATCC 49239 / DSM 5036 / JCM 8891 / ACAM 34).